We begin with the raw amino-acid sequence, 134 residues long: Small ribosomal subunit protein uS8c (134 aa).

This sequence belongs to the universal ribosomal protein uS8 family. In terms of assembly, part of the 30S ribosomal subunit.

Its subcellular location is the plastid. The protein localises to the chloroplast. One of the primary rRNA binding proteins, it binds directly to 16S rRNA central domain where it helps coordinate assembly of the platform of the 30S subunit. This is Small ribosomal subunit protein uS8c (rps8) from Aethionema grandiflorum (Persian stone-cress).